We begin with the raw amino-acid sequence, 607 residues long: DNA primase (607 aa).

The segment at 39–63 (CPFHDDKNPSMSISSSKNIFKCWAC) adopts a CHC2-type zinc-finger fold. A Toprim domain is found at 267–350 (NQLFIVEGYF…IVEIVQWEHN (84 aa)). Mg(2+) is bound by residues E273, D319, and D321.

This sequence belongs to the DnaG primase family. Monomer. Interacts with DnaB. Zn(2+) serves as cofactor. Mg(2+) is required as a cofactor.

The catalysed reaction is ssDNA + n NTP = ssDNA/pppN(pN)n-1 hybrid + (n-1) diphosphate.. Its function is as follows. RNA polymerase that catalyzes the synthesis of short RNA molecules used as primers for DNA polymerase during DNA replication. This Mycoplasma genitalium (strain ATCC 33530 / DSM 19775 / NCTC 10195 / G37) (Mycoplasmoides genitalium) protein is DNA primase.